The sequence spans 108 residues: Urease subunit beta (108 aa).

This sequence belongs to the urease beta subunit family. In terms of assembly, heterotrimer of UreA (gamma), UreB (beta) and UreC (alpha) subunits. Three heterotrimers associate to form the active enzyme.

The protein resides in the cytoplasm. It catalyses the reaction urea + 2 H2O + H(+) = hydrogencarbonate + 2 NH4(+). It participates in nitrogen metabolism; urea degradation; CO(2) and NH(3) from urea (urease route): step 1/1. This Trichormus variabilis (strain ATCC 29413 / PCC 7937) (Anabaena variabilis) protein is Urease subunit beta.